A 95-amino-acid chain; its full sequence is Small ribosomal subunit protein uS19 (95 aa).

The protein belongs to the universal ribosomal protein uS19 family.

Protein S19 forms a complex with S13 that binds strongly to the 16S ribosomal RNA. The protein is Small ribosomal subunit protein uS19 of Clostridium kluyveri (strain NBRC 12016).